Consider the following 507-residue polypeptide: Monocarboxylate transporter 9 (507 aa).

Topologically, residues 1–12 are extracellular; sequence MVYRKPPDGGWG. The chain crosses the membrane as a helical span at residues 13–33; the sequence is WVIVIVSFFTQFLCYGSPLAV. Residues 34–52 lie on the Cytoplasmic side of the membrane; the sequence is GVLYLEWLDAFGEGKGKTA. Residues 53-73 traverse the membrane as a helical segment; the sequence is WVGSLANGIGLLASPVCSICV. Over 74-79 the chain is Extracellular; that stretch reads SSFGAR. Residues 80-100 form a helical membrane-spanning segment; the sequence is PVAIFSGFMVAGGLMMSSFAP. The Cytoplasmic portion of the chain corresponds to 101–102; that stretch reads NI. A helical membrane pass occupies residues 103–123; it reads YFLYLSYGIVVGLGCGLLYNA. At 124-136 the chain is on the extracellular side; sequence TVTITCQYFDKRR. Residues 137–157 form a helical membrane-spanning segment; it reads GLALGLISTGSSVGLFIYAAL. Over 158–163 the chain is Cytoplasmic; the sequence is QRELIE. The chain crosses the membrane as a helical span at residues 164-184; sequence LYGLDGCLLIVGALSLNILAC. The Extracellular segment spans residues 185–302; sequence GSLMRPLESS…EETVVLFKNR (118 aa). Residues 303-323 form a helical membrane-spanning segment; that stretch reads VFSALFFAILLFDIGGFPPSL. At 324–340 the chain is on the cytoplasmic side; the sequence is LMEDIARSANINEEDYH. Residues 341–361 traverse the membrane as a helical segment; the sequence is MPLVSIIGIMTAIGKLILGIL. The Extracellular portion of the chain corresponds to 362–369; it reads ADFKWVNT. The chain crosses the membrane as a helical span at residues 370-390; the sequence is LYLYVLTLLMMGAALLAIPFA. Residues 391 to 395 lie on the Cytoplasmic side of the membrane; the sequence is RSYFT. Residues 396–416 traverse the membrane as a helical segment; the sequence is LAVLSGILGFLTGNWSIFPYV. Residues 417–430 are Extracellular-facing; sequence TTKTVGIEKLTHAY. A helical transmembrane segment spans residues 431–451; the sequence is GILMFFAGLGNSLGPPIVGWF. The Cytoplasmic portion of the chain corresponds to 452–460; it reads YDWTQEYDT. A helical transmembrane segment spans residues 461-481; that stretch reads AFYFSGFCVLLGGFLLLLAAL. The Extracellular segment spans residues 482–507; it reads PCWNACTDRSSKLPPNTYSYKVASSA.

It belongs to the major facilitator superfamily. Monocarboxylate porter (TC 2.A.1.13) family.

The protein localises to the cell membrane. The catalysed reaction is creatine(in) = creatine(out). The enzyme catalyses (R)-carnitine(in) = (R)-carnitine(out). In terms of biological role, extracellular pH-and Na(+)-sensitive low-affinity creatine transporter. Also functions as a pH-independent carnitine efflux transporter. The protein is Monocarboxylate transporter 9 (SLC16A9) of Gallus gallus (Chicken).